A 408-amino-acid polypeptide reads, in one-letter code: Broad specificity amino-acid racemase (408 aa).

An N-terminal signal peptide occupies residues 1–21 (MHKKTLLATLILGLLAGQAVA). The cysteines at positions 70 and 96 are disulfide-linked. Catalysis depends on lysine 74, which acts as the Proton acceptor. The residue at position 74 (lysine 74) is an N6-(pyridoxal phosphate)lysine. Arginine 173 is a substrate binding site. Catalysis depends on tyrosine 300, which acts as the Proton acceptor. A substrate-binding site is contributed by methionine 348.

This sequence belongs to the alanine racemase family. Bsr subfamily. Homodimer. Requires pyridoxal 5'-phosphate as cofactor.

The protein resides in the periplasm. The catalysed reaction is an L-alpha-amino acid = a D-alpha-amino acid. It carries out the reaction L-lysine = D-lysine. The enzyme catalyses L-arginine = D-arginine. It catalyses the reaction L-alanine = D-alanine. The catalysed reaction is L-serine = D-serine. It carries out the reaction L-methionine = D-methionine. The enzyme catalyses L-leucine = D-leucine. It catalyses the reaction L-cysteine = D-cysteine. The catalysed reaction is L-glutamine = D-glutamine. It carries out the reaction L-asparagine = D-asparagine. The enzyme catalyses L-histidine = D-histidine. Its function is as follows. Amino-acid racemase able to utilize a broad range of substrates. Reversibly racemizes ten of the 19 natural chiral amino acids known, including both non-beta-branched aliphatic amino acids (Ala, Leu, Met, Ser, Cys, Gln and Asn) and positively charged amino acids (His, Lys and Arg). Is not active on negatively charged (Glu and Asp) or aromatic (Tyr, Trp and Phe) amino acids and displays minimal activity towards beta-branched aliphatic (Ile, Val and Thr) substrates. Enables bacteria to produce and release extracellular non-canonical D-amino acids (NCDAAs) that regulate diverse cellular processes. The polypeptide is Broad specificity amino-acid racemase (Aeromonas hydrophila subsp. hydrophila (strain ATCC 7966 / DSM 30187 / BCRC 13018 / CCUG 14551 / JCM 1027 / KCTC 2358 / NCIMB 9240 / NCTC 8049)).